The primary structure comprises 174 residues: Shikimate kinase 2 (174 aa).

Residue 12 to 17 coordinates ATP; it reads GCGKTT. Mg(2+)-binding residues include Thr-16 and Asp-32. Substrate contacts are provided by Asp-34, Arg-58, and Gly-79. The LID domain stretch occupies residues 112–126; the sequence is QAAPEEDLRPTLTGK. ATP is bound at residue Arg-120. Arg-139 serves as a coordination point for substrate.

Belongs to the shikimate kinase family. AroL subfamily. Monomer. Requires Mg(2+) as cofactor.

The protein localises to the cytoplasm. The catalysed reaction is shikimate + ATP = 3-phosphoshikimate + ADP + H(+). The protein operates within metabolic intermediate biosynthesis; chorismate biosynthesis; chorismate from D-erythrose 4-phosphate and phosphoenolpyruvate: step 5/7. Functionally, catalyzes the specific phosphorylation of the 3-hydroxyl group of shikimic acid using ATP as a cosubstrate. This chain is Shikimate kinase 2, found in Shigella boydii serotype 4 (strain Sb227).